The primary structure comprises 319 residues: MEPGPALEHIPVMLEQALELLACRRGGVYVDGTVGGGGYSEAILRASAPDGILLGVDWDAEAIGRAAGRLSAYGRRAILTKAGFAELPEVLPRHGFAQVDGIVLDLGVSAFQIDDAARGFSFTKDGPLDMRMDPGLPQTAADMVNTLPEKDLADLIFRLGEERWSRRIARAVVERRRERPFQRTLELADTVAATVPATRDSRRIHPATRTFLALRLAVNQELESLERFLSGALDLLKTGGRLCVVSFHSLEDRMVKGQFKEWAKSCRCPREAVLCRCEGRPLVRLLTRKAVRPDEREKERNPRSRSARLRAVEKQGVPA.

S-adenosyl-L-methionine-binding positions include 37-39 (GGY), aspartate 57, phenylalanine 96, aspartate 105, and glutamine 112. Positions 292-302 (RPDEREKERNP) are enriched in basic and acidic residues. The segment at 292–319 (RPDEREKERNPRSRSARLRAVEKQGVPA) is disordered.

The protein belongs to the methyltransferase superfamily. RsmH family.

The protein localises to the cytoplasm. It catalyses the reaction cytidine(1402) in 16S rRNA + S-adenosyl-L-methionine = N(4)-methylcytidine(1402) in 16S rRNA + S-adenosyl-L-homocysteine + H(+). Its function is as follows. Specifically methylates the N4 position of cytidine in position 1402 (C1402) of 16S rRNA. This is Ribosomal RNA small subunit methyltransferase H from Syntrophobacter fumaroxidans (strain DSM 10017 / MPOB).